Consider the following 227-residue polypeptide: Endonuclease V (227 aa).

Positions 46 and 114 each coordinate Mg(2+).

Belongs to the endonuclease V family. The cofactor is Mg(2+).

It localises to the cytoplasm. The enzyme catalyses Endonucleolytic cleavage at apurinic or apyrimidinic sites to products with a 5'-phosphate.. Its function is as follows. DNA repair enzyme involved in the repair of deaminated bases. Selectively cleaves double-stranded DNA at the second phosphodiester bond 3' to a deoxyinosine leaving behind the intact lesion on the nicked DNA. The chain is Endonuclease V from Alkalilimnicola ehrlichii (strain ATCC BAA-1101 / DSM 17681 / MLHE-1).